The sequence spans 174 residues: Adenine phosphoribosyltransferase (174 aa).

Belongs to the purine/pyrimidine phosphoribosyltransferase family. In terms of assembly, homodimer.

It localises to the cytoplasm. It carries out the reaction AMP + diphosphate = 5-phospho-alpha-D-ribose 1-diphosphate + adenine. It functions in the pathway purine metabolism; AMP biosynthesis via salvage pathway; AMP from adenine: step 1/1. Catalyzes a salvage reaction resulting in the formation of AMP, that is energically less costly than de novo synthesis. This Nitrosomonas eutropha (strain DSM 101675 / C91 / Nm57) protein is Adenine phosphoribosyltransferase.